Reading from the N-terminus, the 299-residue chain is Taste receptor type 2 member 19 (299 aa).

Position 1 (methionine 1) is a topological domain, extracellular. A helical transmembrane segment spans residues 2-22 (MCFLLIISSILVVFAFVLGNV). Residues 23–55 (ANGFIALVNVIDWVNTRKISSAEQILTALVVSR) lie on the Cytoplasmic side of the membrane. A helical transmembrane segment spans residues 56–76 (IGLLWVMLFLWYATVFNSALY). The Extracellular segment spans residues 77–87 (GLEVRIVASNA). A helical transmembrane segment spans residues 88–108 (WAVTNHFSMWLAASLSIFCLL). Over 109 to 127 (KIANFSNLISLHLKKRIKS) the chain is Cytoplasmic. The chain crosses the membrane as a helical span at residues 128 to 148 (VVLVILLGPLVFLICNLAVIT). Residues 149-181 (MDERVWTKEYEGNVTWKIKLRNAIHLSSLTVTT) are Extracellular-facing. An N-linked (GlcNAc...) asparagine glycan is attached at asparagine 161. A helical transmembrane segment spans residues 182–202 (LANLIPFTLSLICFLLLICSL). Residues 203–226 (CKHLKKMRLHSKGSQDPSTKVHIK) are Cytoplasmic-facing. Residues 227 to 247 (ALQTVTSFLMLFAIYFLCIIT) traverse the membrane as a helical segment. The Extracellular portion of the chain corresponds to 248-259 (STWNLRTQQSKL). Residues 260 to 280 (VLLLCQTVAIMYPSFHSFILI) traverse the membrane as a helical segment. The Cytoplasmic segment spans residues 281–299 (MGSRKLKQTFLSVLWQMTR).

It belongs to the G-protein coupled receptor T2R family. In terms of tissue distribution, expressed in subsets of taste receptor cells of the tongue and exclusively in gustducin-positive cells.

It is found in the membrane. Its function is as follows. Receptor that may play a role in the perception of bitterness and is gustducin-linked. May play a role in sensing the chemical composition of the gastrointestinal content. The activity of this receptor may stimulate alpha gustducin, mediate PLC-beta-2 activation and lead to the gating of TRPM5. The polypeptide is Taste receptor type 2 member 19 (TAS2R19) (Homo sapiens (Human)).